Here is a 150-residue protein sequence, read N- to C-terminus: Large ribosomal subunit protein uL15 (150 aa).

The segment at M1 to M57 is disordered. Residues K12–R23 are compositionally biased toward basic residues. Gly residues predominate over residues I25 to M37.

It belongs to the universal ribosomal protein uL15 family. Part of the 50S ribosomal subunit.

Functionally, binds to the 23S rRNA. This chain is Large ribosomal subunit protein uL15, found in Synechococcus sp. (strain CC9311).